We begin with the raw amino-acid sequence, 355 residues long: Elongation factor Ts (355 aa).

Positions 82 to 85 (TDFV) are involved in Mg(2+) ion dislocation from EF-Tu.

Belongs to the EF-Ts family.

Its subcellular location is the cytoplasm. Functionally, associates with the EF-Tu.GDP complex and induces the exchange of GDP to GTP. It remains bound to the aminoacyl-tRNA.EF-Tu.GTP complex up to the GTP hydrolysis stage on the ribosome. The polypeptide is Elongation factor Ts (tsf) (Helicobacter pylori (strain ATCC 700392 / 26695) (Campylobacter pylori)).